The chain runs to 503 residues: WAS/WASL-interacting protein family member 1 (503 aa).

Pro residues predominate over residues 1 to 14; sequence MPVPPPPAPPPPPT. Residues 1–503 are disordered; the sequence is MPVPPPPAPP…GAPPLPPIPR (503 aa). Over residues 21 to 31 the composition is skewed to polar residues; sequence EKPTLNKTEQA. The region spanning 32-49 is the WH2 domain; the sequence is GRNALLSDISKGKKLKKT. An Asymmetric dimethylarginine modification is found at R33. The tract at residues 45 to 48 is binds actin; that stretch reads KLKK. Residues 65 to 104 are compositionally biased toward gly residues; sequence AGAGGGGGGFGGGGGFGGGGGGGGGGSFGGGGPPGLGGLF. The span at 121–137 shows a compositional bias: low complexity; that stretch reads SGGSRPPLLPPGGRSTS. 2 positions are modified to omega-N-methylarginine: R125 and R134. Composition is skewed to pro residues over residues 141–154, 161–174, 182–191, and 204–223; these read FSPPSGPGRFPVPS, PPEPQRNRMPPPRP, SIPPPVPSTP, and PPVPGGPRQPSPGPTPPPFP. S142 carries the phosphoserine modification. S234 is modified (phosphoserine). Positions 238-247 are enriched in low complexity; that stretch reads SPLSSSSPFS. Composition is skewed to pro residues over residues 282–298 and 306–323; these read VPPPPPQNNKPPVPSTP and APPPPPPPSRPGPPPLPP. S340 bears the Phosphoserine mark. A Phosphothreonine modification is found at T345. The span at 346–371 shows a compositional bias: pro residues; sequence PPLPSPGRSGPLPPPPSERPPPPVRD. S350 is subject to Phosphoserine. 3 XRSGPXPPXP motif repeats span residues 352–361, 374–383, and 410–419; these read GRSGPLPPPP and PRSGPRPPLP. The segment covering 413–434 has biased composition (pro residues); sequence GPRPPLPPDRPSAGAPPPPPPS. Basic and acidic residues predominate over residues 480-494; the sequence is ARNESRSGSNRRERG.

It belongs to the verprolin family. In terms of assembly, binds to WAS, profilin and actin. Binds to WASL. Interacts with DBNL. Interacts with FNBP1L (via the SH3 domain). As to expression, highly expressed in peripheral blood mononuclear cells, spleen, placenta, small intestine, colon and thymus. Lower expression in ovary, heart, brain, lung, liver, skeletal muscle, kidney, pancreas, prostate and testis.

Its subcellular location is the cytoplasmic vesicle. It is found in the cytoplasm. The protein localises to the cytoskeleton. The protein resides in the cell projection. It localises to the ruffle. Its function is as follows. Plays a role in the reorganization of the actin cytoskeleton. Contributes with NCK1 and GRB2 in the recruitment and activation of WASL. May participate in regulating the subcellular localization of WASL, resulting in the disassembly of stress fibers in favor of filopodia formation. Plays a role in the formation of cell ruffles. Plays an important role in the intracellular motility of vaccinia virus by functioning as an adapter for recruiting WASL to vaccinia virus. The chain is WAS/WASL-interacting protein family member 1 (WIPF1) from Homo sapiens (Human).